Consider the following 371-residue polypeptide: 4-hydroxyphenylpyruvate dioxygenase-like protein (371 aa).

VOC domains are found at residues 7-135 (RLCH…LLQR) and 160-328 (HVDH…VFTK). 3 residues coordinate Fe cation: His163, His258, and Glu339.

This sequence belongs to the 4HPPD family. It depends on Fe cation as a cofactor.

It localises to the mitochondrion. It carries out the reaction 3-(4-hydroxyphenyl)pyruvate + O2 = (S)-4-hydroxymandelate + CO2. In terms of biological role, iron-dependent dioxygenase that catalyzes the conversion of 4-hydroxyphenylpyruvate (4-HPPA) to 4-hydroxymandelate (4-HMA) in the mitochondria, one of the steps in the biosynthesis of coenzyme Q10 from tyrosine. The protein is 4-hydroxyphenylpyruvate dioxygenase-like protein of Rattus norvegicus (Rat).